The following is a 172-amino-acid chain: Large ribosomal subunit protein uL10 (172 aa).

This sequence belongs to the universal ribosomal protein uL10 family. In terms of assembly, part of the ribosomal stalk of the 50S ribosomal subunit. The N-terminus interacts with L11 and the large rRNA to form the base of the stalk. The C-terminus forms an elongated spine to which L12 dimers bind in a sequential fashion forming a multimeric L10(L12)X complex.

Forms part of the ribosomal stalk, playing a central role in the interaction of the ribosome with GTP-bound translation factors. This is Large ribosomal subunit protein uL10 (rplJ) from Caulobacter vibrioides (strain ATCC 19089 / CIP 103742 / CB 15) (Caulobacter crescentus).